Here is a 516-residue protein sequence, read N- to C-terminus: Replication factor C large subunit (516 aa).

44-51 (GAPGVGKT) is a binding site for ATP. The segment at 421–516 (RSEAVEAHAG…DGQAGLSEFM (96 aa)) is disordered. Positions 454–467 (VQSHKSAESGDDTV) are enriched in basic and acidic residues. The segment covering 479–496 (QSGASETASATESASDSD) has biased composition (low complexity). The segment covering 497–508 (ASTDTDADDDDG) has biased composition (acidic residues).

It belongs to the activator 1 small subunits family. RfcL subfamily. As to quaternary structure, heteromultimer composed of small subunits (RfcS) and large subunits (RfcL).

Its function is as follows. Part of the RFC clamp loader complex which loads the PCNA sliding clamp onto DNA. The sequence is that of Replication factor C large subunit from Haloquadratum walsbyi (strain DSM 16790 / HBSQ001).